A 449-amino-acid polypeptide reads, in one-letter code: MTHIKFDYSKVLGKFLASHELDYIQMQVTAADEALRKGTGPGAEMTGWLNLPQNYDKEEFARIKKAAEKIKSDSEVLVVIGIGGSYLGARAAIDFLNSSFVNLENKEERKAPQILYAGNSISSNYLADLVDYVADKDFSVNVISKSGTTTEPAIAFRVFKDLLVKKYGQEEANQRIYATTDRVKGAVKVEADANGWETFVVPDSVGGRFTVLTAVGLLPIAASGADLDQLMAGAEAARQDYSSAELSENEAYQYAAIRNILYRKGYVTEVLANYEPSLQYFSEWWKQLAGESEGKDQKGIYPTSANFSTDLHSLGQFIQEGNRNLFETVIRVEKARKNILVPEAAEDLDGLAYLQGKDVDFVNKKATDGVLLAHTDGGVPNTFLTIPEQDEFTLGYVIYFFELAIGLSGYLNGVNPFDQPGVEAYKKNMFALLGKPGFEELGAELNARL.

E291 acts as the Proton donor in catalysis. Residues H312 and K426 contribute to the active site.

This sequence belongs to the GPI family.

It localises to the cytoplasm. The enzyme catalyses alpha-D-glucose 6-phosphate = beta-D-fructose 6-phosphate. It participates in carbohydrate biosynthesis; gluconeogenesis. It functions in the pathway carbohydrate degradation; glycolysis; D-glyceraldehyde 3-phosphate and glycerone phosphate from D-glucose: step 2/4. Functionally, catalyzes the reversible isomerization of glucose-6-phosphate to fructose-6-phosphate. The polypeptide is Glucose-6-phosphate isomerase (Streptococcus mutans serotype c (strain ATCC 700610 / UA159)).